The primary structure comprises 116 residues: Holo-[acyl-carrier-protein] synthase (116 aa).

The Mg(2+) site is built by D5 and E50.

It belongs to the P-Pant transferase superfamily. AcpS family. Mg(2+) serves as cofactor.

It is found in the cytoplasm. It carries out the reaction apo-[ACP] + CoA = holo-[ACP] + adenosine 3',5'-bisphosphate + H(+). Its function is as follows. Transfers the 4'-phosphopantetheine moiety from coenzyme A to a Ser of acyl-carrier-protein. In Nitratiruptor sp. (strain SB155-2), this protein is Holo-[acyl-carrier-protein] synthase.